The chain runs to 285 residues: RNA polymerase sigma factor RpoH (285 aa).

The interval 53–122 (LILSHLRFVV…IHEYVLRNWR (70 aa)) is sigma-70 factor domain-2. An Interaction with polymerase core subunit RpoC motif is present at residues 77 to 80 (DLIQ). Residues 229-281 (AMEGLDERSQDIIRARWLDEDNKSTLQELADRYGVSAERVRQLEKNAMKKLRA) form a sigma-70 factor domain-4 region. The segment at residues 254-273 (LQELADRYGVSAERVRQLEK) is a DNA-binding region (H-T-H motif).

The protein belongs to the sigma-70 factor family. RpoH subfamily. Interacts with the RNA polymerase core enzyme.

The protein localises to the cytoplasm. In terms of biological role, sigma factors are initiation factors that promote the attachment of RNA polymerase to specific initiation sites and are then released. This sigma factor is involved in regulation of expression of heat shock genes. This is RNA polymerase sigma factor RpoH from Enterobacter cloacae.